A 320-amino-acid chain; its full sequence is MTTNYSEPDPLVCDETYSSSIEILKYLLTISYLIPGGILHLFILHTILVTRRGYFKGSSFFAIFALDSVSSIIIVFIDSFYGRLFLYVPPLCPIVGPFFWASSLIPKIYFYLSVHTRLSKCVAHICMVLNRMTCVLMPTYYGQIWRKLTKVSLVIICILPLGGTWNIIISPRFYVLPSYGGFAISYVRAIPWASSSLFQSIYILTALVFTFICTSVTLYKLISLSDRIKSAEKSLCFSNIYISLTFLAAAASQALYAFCTSCMSSDLLFTAQFLAFDMFTVGSAVILFWSNSQIRGLILPSKAEDDRIFRVQTINNSFTH.

A run of 7 helical transmembrane segments spans residues 29–49 (TISY…TILV), 57–77 (GSSF…IVFI), 85–105 (FLYV…SSLI), 151–171 (VSLV…IISP), 197–217 (LFQS…TSVT), 240–260 (IYIS…AFCT), and 268–288 (LFTA…VILF).

Belongs to the nematode receptor-like protein srg family.

Its subcellular location is the membrane. This is Serpentine receptor class gamma-15 (srg-15) from Caenorhabditis elegans.